Reading from the N-terminus, the 802-residue chain is Probable inactive leucine-rich repeat receptor-like protein kinase At3g03770 (802 aa).

An N-terminal signal peptide occupies residues 1 to 26 (MEKLYCGMPLLLLVLLLASIDGSTQL). Residues 27–391 (QSSQSQTLLR…RNKVSKVGIA (365 aa)) are Extracellular-facing. Asparagine 52 and asparagine 83 each carry an N-linked (GlcNAc...) asparagine glycan. LRR repeat units lie at residues 71–94 (EDSV…SFSI), 104–128 (LPDV…INRL), 129–152 (SSLE…LSSL), 153–176 (ATLQ…IDSL), 177–200 (PSLA…LSSL), 201–225 (SGLR…HLTN), 227–244 (QVLD…PRLS), 245–268 (NKLV…EVSS), 269–293 (LYQL…LMSL), 294–317 (PAIT…LSCN), and 319–341 (QLMF…LKPS). The N-linked (GlcNAc...) asparagine glycan is linked to asparagine 135. Asparagine 190 is a glycosylation site (N-linked (GlcNAc...) asparagine). N-linked (GlcNAc...) asparagine glycans are attached at residues asparagine 300 and asparagine 313. The helical transmembrane segment at 392–412 (LGVTASILGVLLLAGALFVVL) threads the bilayer. At 413–802 (RRLNAKKTVT…RDSGCEEHER (390 aa)) the chain is on the cytoplasmic side. The Protein kinase domain occupies 477–759 (FESSAFMGEG…FASQVQEGWL (283 aa)). Positions 761–802 (NSNPSSNLGSPSPAASSLPPPSRLHVTTLESPRDSGCEEHER) are disordered. The segment covering 762–777 (SNPSSNLGSPSPAASS) has biased composition (low complexity). The span at 791–802 (SPRDSGCEEHER) shows a compositional bias: basic and acidic residues.

The protein belongs to the protein kinase superfamily. Ser/Thr protein kinase family.

The protein localises to the cell membrane. The protein is Probable inactive leucine-rich repeat receptor-like protein kinase At3g03770 of Arabidopsis thaliana (Mouse-ear cress).